Consider the following 31-residue polypeptide: Cytochrome b6-f complex subunit 6 (31 aa).

A helical membrane pass occupies residues 4–24 (ITSYFGFLLAALTITSALFIG).

The protein belongs to the PetL family. As to quaternary structure, the 4 large subunits of the cytochrome b6-f complex are cytochrome b6, subunit IV (17 kDa polypeptide, PetD), cytochrome f and the Rieske protein, while the 4 small subunits are PetG, PetL, PetM and PetN. The complex functions as a dimer.

The protein resides in the plastid. It localises to the chloroplast thylakoid membrane. In terms of biological role, component of the cytochrome b6-f complex, which mediates electron transfer between photosystem II (PSII) and photosystem I (PSI), cyclic electron flow around PSI, and state transitions. PetL is important for photoautotrophic growth as well as for electron transfer efficiency and stability of the cytochrome b6-f complex. This chain is Cytochrome b6-f complex subunit 6, found in Citrus sinensis (Sweet orange).